A 77-amino-acid polypeptide reads, in one-letter code: Putative membrane protein insertion efficiency factor (77 aa).

The protein belongs to the UPF0161 family.

The protein resides in the cell membrane. Functionally, could be involved in insertion of integral membrane proteins into the membrane. In Geobacillus sp. (strain WCH70), this protein is Putative membrane protein insertion efficiency factor.